The chain runs to 185 residues: MAESHGNAHGATAHTEADGGHKAPFPPFQKETFASQLVSLTIAFVALYLISSRLALPRVRQTIDDRENTIKGDLAQAQKLKDDSDAALKAYEAELAAARARAQAIGNETREKLNAAAEAERKALEERLSVKLADAEKTIASTRAAAMSNVRGIASDAATAIVQQLTGATPDSKLVDSAVDASMKG.

The interval 1–25 (MAESHGNAHGATAHTEADGGHKAPF) is disordered. Residues 34-56 (ASQLVSLTIAFVALYLISSRLAL) traverse the membrane as a helical segment.

The protein belongs to the ATPase B chain family. F-type ATPases have 2 components, F(1) - the catalytic core - and F(0) - the membrane proton channel. F(1) has five subunits: alpha(3), beta(3), gamma(1), delta(1), epsilon(1). F(0) has three main subunits: a(1), b(2) and c(10-14). The alpha and beta chains form an alternating ring which encloses part of the gamma chain. F(1) is attached to F(0) by a central stalk formed by the gamma and epsilon chains, while a peripheral stalk is formed by the delta and b chains.

The protein resides in the cell inner membrane. Its function is as follows. F(1)F(0) ATP synthase produces ATP from ADP in the presence of a proton or sodium gradient. F-type ATPases consist of two structural domains, F(1) containing the extramembraneous catalytic core and F(0) containing the membrane proton channel, linked together by a central stalk and a peripheral stalk. During catalysis, ATP synthesis in the catalytic domain of F(1) is coupled via a rotary mechanism of the central stalk subunits to proton translocation. Component of the F(0) channel, it forms part of the peripheral stalk, linking F(1) to F(0). The b'-subunit is a diverged and duplicated form of b found in plants and photosynthetic bacteria. The polypeptide is ATP synthase subunit b 2 (atpF2) (Nitrobacter winogradskyi (strain ATCC 25391 / DSM 10237 / CIP 104748 / NCIMB 11846 / Nb-255)).